The sequence spans 191 residues: MKKSLLGLTFASLMFSAGSAVAADYKIDKEGQHAFVNFRIQHLGYSWLYGTFKDFDGTFTFDEKNPAADKVNVTINTTSVDTNHAERDKHLRSADFLNTAKYPQATFTSTSVKKDGDDLDITGDLTLNGVTKPVTLEAKLIGQGDDPWGGKRAGFEAEGKIKLKDFNIKTDLGPASQEVDLIISVEGVQQK.

The N-terminal stretch at 1-22 (MKKSLLGLTFASLMFSAGSAVA) is a signal peptide.

The protein belongs to the UPF0312 family. Type 1 subfamily.

The protein localises to the periplasm. The chain is Protein YceI from Escherichia coli O17:K52:H18 (strain UMN026 / ExPEC).